The chain runs to 286 residues: Leukocyte cell-derived chemotaxin 1 (286 aa).

A helical transmembrane segment spans residues 29–49 (LVAFIAGAALLLFGGVGAFYL). A BRICHOS domain is found at 75–157 (DSAEGTIVEV…FCADLPIYWH (83 aa)). Cysteines 102 and 149 form a disulfide. Positions 166-169 (RKRR) are excised as a propeptide. Over residues 166 to 176 (RKRRSATRMRR) the composition is skewed to basic residues. Residues 166 to 220 (RKRRSATRMRRQTSAGVNRQPARRRNSTASARDERPTGPEYNPENPYHQNQGSEG) are disordered. The N-linked (GlcNAc...) asparagine glycan is linked to asparagine 191. 4 disulfides stabilise this stretch: cysteine 234–cysteine 238, cysteine 235–cysteine 275, cysteine 245–cysteine 269, and cysteine 249–cysteine 265.

The protein belongs to the chondromodulin-1 family. Post-translationally, after cleavage, the post-translationally modified ChM-I is secreted as a glycoprotein.

The protein localises to the secreted. It is found in the extracellular space. It localises to the extracellular matrix. Its subcellular location is the endomembrane system. In terms of biological role, bifunctional growth regulator. May contribute to the rapid growth of cartilage and vascular invasion prior to the replacement of cartilage by bone during endochondral bone development. Plays a role as antiangiogenic factor in cardiac valves to suppress neovascularization. This Danio rerio (Zebrafish) protein is Leukocyte cell-derived chemotaxin 1.